The sequence spans 697 residues: Potassium-transporting ATPase ATP-binding subunit (697 aa).

A run of 4 helical transmembrane segments spans residues 36–56 (VMFV…RDLI), 66–86 (LQII…EAVA), 218–238 (IALN…TATI), and 253–273 (VLVA…LSAI). Catalysis depends on Asp-306, which acts as the 4-aspartylphosphate intermediate. Residues Asp-343, Glu-347, 376 to 383 (FTAQTRMS), and Lys-394 each bind ATP. Positions 526 and 530 each coordinate Mg(2+). 3 helical membrane passes run 595–615 (YFAI…QSTG), 631–651 (AILS…PLSL), and 669–689 (LLVY…IIDM).

The protein belongs to the cation transport ATPase (P-type) (TC 3.A.3) family. Type IA subfamily. The system is composed of three essential subunits: KdpA, KdpB and KdpC.

The protein localises to the cell inner membrane. The catalysed reaction is K(+)(out) + ATP + H2O = K(+)(in) + ADP + phosphate + H(+). Part of the high-affinity ATP-driven potassium transport (or Kdp) system, which catalyzes the hydrolysis of ATP coupled with the electrogenic transport of potassium into the cytoplasm. This subunit is responsible for energy coupling to the transport system and for the release of the potassium ions to the cytoplasm. The chain is Potassium-transporting ATPase ATP-binding subunit from Mesorhizobium japonicum (strain LMG 29417 / CECT 9101 / MAFF 303099) (Mesorhizobium loti (strain MAFF 303099)).